The chain runs to 367 residues: C-C chemokine receptor type 6 (367 aa).

The Extracellular segment spans residues 1 to 39; it reads MNSTESYFGTDDYDNTEYYSIPPDHGPCSLEEVRNFTKV. N-linked (GlcNAc...) asparagine glycans are attached at residues asparagine 2 and asparagine 35. Residues 40 to 66 traverse the membrane as a helical segment; it reads FVPIAYSLICVFGLLGNIMVVMTFAFY. Over 67–75 the chain is Cytoplasmic; sequence KKARSMTDV. A helical membrane pass occupies residues 76–96; sequence YLLNMAITDILFVLTLPFWAV. Over 97–111 the chain is Extracellular; that stretch reads THATNTWVFSDALCK. Residues cysteine 110 and cysteine 189 are joined by a disulfide bond. Residues 112-133 traverse the membrane as a helical segment; it reads LMKGTYAVNFNCGMLLLACISM. Residues 134–151 are Cytoplasmic-facing; it reads DRYIAIVQATKSFRVRSR. Residues 152-172 form a helical membrane-spanning segment; sequence TLTHSKVICVAVWFISIIISS. The Extracellular segment spans residues 173-203; sequence PTFIFNKKYELQDRDVCEPRYRSVSEPITWK. Residues 204 to 230 traverse the membrane as a helical segment; the sequence is LLGMGLELFFGFFTPLLFMVFCYLFII. Residues 231 to 246 are Cytoplasmic-facing; that stretch reads KTLVQAQNSKRHRAIR. Residues 247–271 form a helical membrane-spanning segment; it reads VVIAVVLVFLACQIPHNMVLLVTAV. Residues 272 to 295 are Extracellular-facing; the sequence is NTGKVGRSCSTEKVLAYTRNVAEV. Residues 296 to 313 traverse the membrane as a helical segment; that stretch reads LAFLHCCLNPVLYAFIGQ. Residues 314-367 lie on the Cytoplasmic side of the membrane; the sequence is KFRNYFMKIMKDVWCMRRKNKMPGFLCARVYSESYISRQTSETVENDNASSFTM.

It belongs to the G-protein coupled receptor 1 family. Sperm. Mainly localized in the principal piece and neck region of the tail but is also found in the acrosomal region in a small percentage of sperm cells. Expressed in natural regulatory T cells (nTregs) and a subset of early thymocyte progenitor double-negative 1 (DN1) cells. Expressed in memory B cells. Expressed by IL17 producing helper T-cells (Th17), type 1 effector cells (Th1), type 2 effector cells (Th2) and regulatory T-cells (Treg) (at protein level). Expressed by Th17 cells in spleen, Peyers patches, and lamina propria of small and large intestine. Highly expressed in testis, lung, colon, and dendritic cells.

It localises to the cell membrane. Its subcellular location is the cell surface. In terms of biological role, receptor for the C-C type chemokine CCL20. Binds to CCL20 and subsequently transduces a signal by increasing the intracellular calcium ion levels. Although CCL20 is its major ligand it can also act as a receptor for non-chemokine ligands such as beta-defensins. Binds to defensin DEFB1 leading to increase in intracellular calcium ions and cAMP levels. Its binding to DEFB1 is essential for the function of DEFB1 in regulating sperm motility and bactericidal activity. Binds to defensins DEFB4 and DEFB4A/B and mediates their chemotactic effects. The ligand-receptor pair CCL20-CCR6 is responsible for the chemotaxis of dendritic cells (DC), effector/memory T-cells and B-cells and plays an important role at skin and mucosal surfaces under homeostatic and inflammatory conditions, as well as in pathology, including cancer and various autoimmune diseases. CCR6-mediated signals are essential for immune responses to microbes in the intestinal mucosa and in the modulation of inflammatory responses initiated by tissue insult and trauma. CCR6 is essential for the recruitment of both the pro-inflammatory IL17 producing helper T-cells (Th17) and the regulatory T-cells (Treg) to sites of inflammation. Required for the normal migration of Th17 cells in Peyers patches and other related tissue sites of the intestine and plays a role in regulating effector T-cell balance and distribution in inflamed intestine. Plays an important role in the coordination of early thymocyte precursor migration events important for normal subsequent thymocyte precursor development, but is not required for the formation of normal thymic natural regulatory T-cells (nTregs). Required for optimal differentiation of DN2 and DN3 thymocyte precursors. Essential for B-cell localization in the subepithelial dome of Peyers-patches and for efficient B-cell isotype switching to IgA in the Peyers-patches. Essential for appropriate anatomical distribution of memory B-cells in the spleen and for the secondary recall response of memory B-cells. Positively regulates sperm motility and chemotaxis via its binding to CCL20. This Mus musculus (Mouse) protein is C-C chemokine receptor type 6 (Ccr6).